The following is a 300-amino-acid chain: tRNA dimethylallyltransferase (300 aa).

An ATP-binding site is contributed by 9–16; that stretch reads GPTASGKS. 11–16 contributes to the substrate binding site; sequence TASGKS. The interval 34–37 is interaction with substrate tRNA; sequence DSKQ.

The protein belongs to the IPP transferase family. Monomer. Requires Mg(2+) as cofactor.

It carries out the reaction adenosine(37) in tRNA + dimethylallyl diphosphate = N(6)-dimethylallyladenosine(37) in tRNA + diphosphate. In terms of biological role, catalyzes the transfer of a dimethylallyl group onto the adenine at position 37 in tRNAs that read codons beginning with uridine, leading to the formation of N6-(dimethylallyl)adenosine (i(6)A). This chain is tRNA dimethylallyltransferase, found in Ehrlichia ruminantium (strain Welgevonden).